A 110-amino-acid polypeptide reads, in one-letter code: Large ribosomal subunit protein uL22 (110 aa).

Belongs to the universal ribosomal protein uL22 family. Part of the 50S ribosomal subunit.

This protein binds specifically to 23S rRNA; its binding is stimulated by other ribosomal proteins, e.g. L4, L17, and L20. It is important during the early stages of 50S assembly. It makes multiple contacts with different domains of the 23S rRNA in the assembled 50S subunit and ribosome. Its function is as follows. The globular domain of the protein is located near the polypeptide exit tunnel on the outside of the subunit, while an extended beta-hairpin is found that lines the wall of the exit tunnel in the center of the 70S ribosome. The protein is Large ribosomal subunit protein uL22 of Campylobacter fetus subsp. fetus (strain 82-40).